A 367-amino-acid chain; its full sequence is CCN family member 4 (367 aa).

The N-terminal stretch at 1–22 is a signal peptide; the sequence is MRWFLPWTLAAVTAAAASTVLA. Residues 45–118 enclose the IGFBP N-terminal domain; it reads RPQFCKWPCE…RYAIGVCAQV (74 aa). 4 disulfide bridges follow: C49–C73, C53–C75, C55–C76, and C62–C79. The N-linked (GlcNAc...) asparagine glycan is linked to N86. Disulfide bonds link C87–C101 and C93–C115. Residues 121–186 enclose the VWFC domain; it reads VGCVLDGVRY…GHCCEQWVCE (66 aa). N-linked (GlcNAc...) asparagine glycosylation occurs at N143. Residues 215-260 enclose the TSP type-1 domain; the sequence is NCIAYTSPWSPCSTSCGLGVSTRISNVNAQCWPEQESRLCNLRPCD. 5 disulfide bridges follow: C273–C310, C290–C324, C301–C340, C304–C342, and C309–C346. The CTCK domain maps to 273-347; the sequence is CLAVYQPEAS…NACFCNLSCR (75 aa). A glycan (N-linked (GlcNAc...) asparagine) is linked at N284. N-linked (GlcNAc...) asparagine glycosylation occurs at N343.

Belongs to the CCN family. Expressed in heart, kidney, lung, pancreas, placenta, ovary, small intestine and spleen. Isoform 2 is expressed predominantly in scirrhous gastric carcinoma and, weakly in placenta. Overexpression is associated with several cancers including breast cancer and colon tumors. Isoform 2 is overexpressed in scirrhous gastric carcinoma.

The protein resides in the secreted. Functionally, downstream regulator in the Wnt/Frizzled-signaling pathway. Associated with cell survival. Attenuates p53-mediated apoptosis in response to DNA damage through activation of AKT kinase. Up-regulates the anti-apoptotic Bcl-X(L) protein. Adheres to skin and melanoma fibroblasts. In vitro binding to skin fibroblasts occurs through the proteoglycans, decorin and biglycan. The sequence is that of CCN family member 4 from Homo sapiens (Human).